A 442-amino-acid polypeptide reads, in one-letter code: HTH-type transcriptional regulator NorG (442 aa).

Residues 2 to 46 enclose the HTH gntR-type domain; sequence KIPSHRQLAIQYNVNRVTIIKSIELLEAEGFIYTKVGSGTYVNDY. A DNA-binding region (H-T-H motif) is located at residues 6 to 25; it reads HRQLAIQYNVNRVTIIKSIE. K288 bears the N6-(pyridoxal phosphate)lysine mark.

In the C-terminal section; belongs to the class-I pyridoxal-phosphate-dependent aminotransferase family. Pyridoxal 5'-phosphate is required as a cofactor.

Its function is as follows. Positively regulates the expression of the NorB efflux pump and negatively regulates the expression of the AbcA efflux pump. Binds specifically to the promoters of norA, norB and norC and abcA genes. Could also have an aminotransferase activity. This chain is HTH-type transcriptional regulator NorG (norG), found in Staphylococcus aureus (strain USA300).